The following is a 578-amino-acid chain: Thiol:disulfide interchange protein DsbD (578 aa).

Positions 1-24 (MAQRFITLILLLCSILLAPHSAQA) are cleaved as a signal peptide. 2 cysteine pairs are disulfide-bonded: C134-C140 and C195-C317. Helical transmembrane passes span 183–203 (ALLIGIGIAFTPCVLPMYPLI), 219–239 (ILLLAIVYVQGMALTYTLLGL), 256–276 (YVLIGLSALFVLLALSMFGLY), 297–317 (GGSLAGVFAMGALAGLICSPC), 318–338 (TTAPLSAILLYIAQSGNMLAG), 339–359 (GGTLYLYALGMGIPLVIVTLF), 370–390 (WMQYVKEAFGFVILALPVFLL), 397–417 (VWGLRLWSLLAIAFFGWAFIL), and 421–441 (AHSGWARAFQLLLLAALLIAA). In terms of domain architecture, Thioredoxin spans 438-578 (LIAARPLQDW…FLQHLQNLPR (141 aa)). A disulfide bridge links C493 with C496.

The protein belongs to the thioredoxin family. DsbD subfamily.

It is found in the cell inner membrane. The catalysed reaction is [protein]-dithiol + NAD(+) = [protein]-disulfide + NADH + H(+). The enzyme catalyses [protein]-dithiol + NADP(+) = [protein]-disulfide + NADPH + H(+). Functionally, required to facilitate the formation of correct disulfide bonds in some periplasmic proteins and for the assembly of the periplasmic c-type cytochromes. Acts by transferring electrons from cytoplasmic thioredoxin to the periplasm. This transfer involves a cascade of disulfide bond formation and reduction steps. The polypeptide is Thiol:disulfide interchange protein DsbD (Yersinia enterocolitica serotype O:8 / biotype 1B (strain NCTC 13174 / 8081)).